The following is a 186-amino-acid chain: Catechol O-methyltransferase (186 aa).

Residues valine 7, glutamate 29, serine 37, glutamate 55, leucine 56, 82–85, serine 84, and aspartate 106 contribute to the S-adenosyl-L-methionine site; that span reads GASQ. Aspartate 106 contributes to the Mg(2+) binding site. A substrate-binding site is contributed by lysine 109. Mg(2+)-binding residues include aspartate 134 and asparagine 135. 2 residues coordinate substrate: asparagine 135 and glutamate 164. At serine 182 the chain carries Phosphoserine.

Belongs to the class I-like SAM-binding methyltransferase superfamily. Cation-dependent O-methyltransferase family. Requires Mg(2+) as cofactor.

It localises to the cytoplasm. It is found in the cell membrane. It catalyses the reaction a catechol + S-adenosyl-L-methionine = a guaiacol + S-adenosyl-L-homocysteine + H(+). The catalysed reaction is 2-hydroxyestrone + S-adenosyl-L-methionine = 2-hydroxy-3-methoxy-estrone + S-adenosyl-L-homocysteine + H(+). It carries out the reaction 4-hydroxyestrone + S-adenosyl-L-methionine = 4-methoxyestrone + S-adenosyl-L-homocysteine + H(+). The enzyme catalyses 2-hydroxyestrone + S-adenosyl-L-methionine = 2-methoxyestrone + S-adenosyl-L-homocysteine + H(+). It catalyses the reaction 4-hydroxy-17beta-estradiol + S-adenosyl-L-methionine = 4-methoxy-17beta-estradiol + S-adenosyl-L-homocysteine + H(+). The catalysed reaction is 2-hydroxy-17beta-estradiol + S-adenosyl-L-methionine = 2-hydroxy-3-methoxy-17beta-estradiol + S-adenosyl-L-homocysteine + H(+). It carries out the reaction 2-hydroxy-17beta-estradiol + S-adenosyl-L-methionine = 2-methoxy-17beta-estradiol + S-adenosyl-L-homocysteine + H(+). Functionally, catalyzes the O-methylation, and thereby the inactivation, of catecholamine neurotransmitters and catechol hormones. Also shortens the biological half-lives of certain neuroactive drugs, like L-DOPA, alpha-methyl DOPA and isoproterenol. In Sus scrofa (Pig), this protein is Catechol O-methyltransferase (COMT).